A 688-amino-acid chain; its full sequence is G protein-coupled receptor kinase 3 (688 aa).

The interval 1 to 190 is N-terminal; that stretch reads MADLEAVLAD…ELNIHLSMND (190 aa). The 122-residue stretch at 54-175 folds into the RGS domain; the sequence is TFDKIFNQKI…MESDKFTRFC (122 aa). The Protein kinase domain occupies 191-453; it reads FSVHRIIGRG…ARELKEHIFF (263 aa). Residues 197-205 and Lys220 each bind ATP; that span reads IGRGGFGEV. Asp317 (proton acceptor) is an active-site residue. In terms of domain architecture, AGC-kinase C-terminal spans 454–521; the sequence is KGIDWQHVYL…VISERWQQEV (68 aa). The 95-residue stretch at 558–652 folds into the PH domain; that stretch reads DCIMHGYMLK…WLKELTCTFN (95 aa).

Belongs to the protein kinase superfamily. AGC Ser/Thr protein kinase family. GPRK subfamily. As to quaternary structure, interacts with GIT1. Ubiquitinated.

It localises to the postsynapse. The protein resides in the presynapse. It catalyses the reaction [beta-adrenergic receptor] + ATP = [beta-adrenergic receptor]-phosphate + ADP + H(+). Its function is as follows. Specifically phosphorylates the agonist-occupied form of the beta-adrenergic and closely related receptors. The protein is G protein-coupled receptor kinase 3 of Mus musculus (Mouse).